A 315-amino-acid chain; its full sequence is N-acetyl-D-glutamate racemase (315 aa).

The Mg(2+) site is built by Asp147, Glu173, and Asp196.

Belongs to the mandelate racemase/muconate lactonizing enzyme family. Mg(2+) is required as a cofactor.

The enzyme catalyses N-acetyl-D-glutamate = N-acetyl-L-glutamate. The protein operates within amino-acid degradation. Functionally, racemase involved in a deamination-independent D-glutamate degradation pathway, named the DgcN-DgcA pathway. Catalyzes the conversion of N-acetyl-D-glutamate to N-acetyl-L-glutamate. Also shows racemase activity towards the dipeptide L-Ala-D-Glu, a key constituent of peptidoglycan muropeptides, suggesting that it may also contribute to the degradation of peptidoglycans. This chain is N-acetyl-D-glutamate racemase, found in Pseudoalteromonas sp.